Consider the following 416-residue polypeptide: MIRWLLLMYLGITCQGVTDIHSRNLTNSLKVIYEWKYIDYDFGSDEKRQAAIQSGDYNYTMNYLLDTDQWGDKTFVIIMKFNGVPSSLNVITNKTGNGGPLLAPYPDWTWAKNENCSGITSAYKIEIDMCDRLWVLDSGLINNVRSVCPPQLLVFDLNTSQLLKQVKIPHDIAVNTTTEKGALVTLSVQLLSCEVNGSTLVYIGDNEGFALIIYNNSDNSFQRLTSSTFASDPRYTTFTINGESFTLQSGIFGMALSPLTQNLYYSALSSHNLNYVNTEQFVKSQYQANNVHYQGKENILWTQASAKGISDNGVLFFGLVGDTSLACWNENRLLDRRNIEVVAKNKETLQAITGLKVKRRISFILVHGFPLEYEYVLAVSNRIQKVIYGFDFNDVNFRILIANVNDLIKNTRCISP.

The first 16 residues, 1–16 (MIRWLLLMYLGITCQG), serve as a signal peptide directing secretion. Asn-24, Asn-58, Asn-93, Asn-115, Asn-158, Asn-175, Asn-196, and Asn-215 each carry an N-linked (GlcNAc...) asparagine glycan.

This sequence belongs to the major royal jelly protein family. Expressed at very low levels in the hypopharyngeal glands of worker honey bees (at protein level). Secreted into bee venom in the sting apparatus (at protein level). Expressed in the spermatheca of adult queen bees (at protein level); expression levels are higher in mated queens than in virgin queens. Along with Mrjp9 expressed at very low levels in the head of worker bees compared to other major royal jelly proteins.

It is found in the secreted. Its function is as follows. Component of bee sting venom. Component of royal jelly, a substance produced in the hypopharyngeal gland containing proteins, free amino acids, fatty acids, sugars and other nutrients, which is fed to developing larvae by worker nurse bees; may be present only at trace levels. All larvae are fed some royal jelly (also known as worker jelly) early in their development but it forms the principal source of nutrition for larvae destined to become queen bees. Produced in the spermatheca of adult queen bees, along with other major royal jelly proteins, where it may act as a nutrient supply for sperm stored by mated queens, or be involved in energy metabolism. The protein is Major royal jelly protein 8 of Apis mellifera (Honeybee).